Reading from the N-terminus, the 1134-residue chain is MDCSLVRTLVHRYCAGEENWVDSRTIYVGHREPPPGAEAYIPQRYPDNRIVSSKYTFWNFIPKNLFEQFRRVANFYFLIIFLVQLIIDTPTSPVTSGLPLFFVITVTAIKQGYEDWLRHKADNAMNQCPVHFIQHGKLVRKQSRKLRVGDIVMVKEDETFPCDLIFLSSNRGDGTCHVTTASLDGESSHKTHYAVQDTKGFHTEEDIGGLHATIECEQPQPDLYKFVGRINVYSDLNDPVVRPLGSENLLLRGATLKNTEKIFGVAIYTGMETKMALNYQSKSQKRSAVEKSMNAFLIVYLCILISKALINTVLKYMWQSEPFRDEPWYNQKTESERQRNLFLKAFTDFLAFMVLFNYIIPVSMYVTVEMQKFLGSYFITWDEDMFDEETGEGPLVNTSDLNEELGQVEYIFTDKTGTLTENNMEFKECCIEGHVYVPHVICNGQVLPESSGIDMIDSSPSVNGREREELFFRALCLCHTVQVKDDDSVDGPRKSPDGGKSCVYISSSPDEVALVEGVQRLGFTYLRLKDNYMEILNRENHIERFELLEILSFDSVRRRMSVIVKSATGEIYLFCKGADSSIFPRVIEGKVDQIRARVERNAVEGLRTLCVAYKRLIQEEYEGICKLLQAAKVALQDREKKLAEAYEQIEKDLTLLGATAVEDRLQEKAADTIEALQKAGIKVWVLTGDKMETAAATCYACKLFRRNTQLLELTTKRIEEQSLHDVLFELSKTVLRHSGSLTRDNLSGLSADMQDYGLIIDGAALSLIMKPREDGSSGNYRELFLEICRSCSAVLCCRMAPLQKAQIVKLIKFSKEHPITLAIGDGANDVSMILEAHVGIGVIGKEGRQAARNSDYAIPKFKHLKKMLLVHGHFYYIRISELVQYFFYKNVCFIFPQFLYQFFCGFSQQTLYDTAYLTLYNISFTSLPILLYSLMEQHVGIDVLKRDPTLYRDVAKNALLRWRVFIYWTLLGLFDALVFFFGAYFVFENTTVTSNGQIFGNWTFGTLVFTVMVFTVTLKLALDTHYWTWINHFVIWGSLLFYVVFSLLWGGVIWPFLNYQRMYYVFIQMLSSGPAWLAIVLLVTISLLPDVLKKVLCRQLWPTATERVQTKSQCLSVEQSTIFMLSQTSSSLSF.

The Cytoplasmic portion of the chain corresponds to 1–61; it reads MDCSLVRTLV…SSKYTFWNFI (61 aa). Residues 62 to 82 form a helical membrane-spanning segment; the sequence is PKNLFEQFRRVANFYFLIIFL. Residues 83–88 are Extracellular-facing; sequence VQLIID. The helical transmembrane segment at 89 to 110 threads the bilayer; that stretch reads TPTSPVTSGLPLFFVITVTAIK. Topologically, residues 111–296 are cytoplasmic; the sequence is QGYEDWLRHK…SAVEKSMNAF (186 aa). A helical membrane pass occupies residues 297–318; sequence LIVYLCILISKALINTVLKYMW. Topologically, residues 319–349 are extracellular; sequence QSEPFRDEPWYNQKTESERQRNLFLKAFTDF. A helical membrane pass occupies residues 350–372; sequence LAFMVLFNYIIPVSMYVTVEMQK. The Cytoplasmic portion of the chain corresponds to 373–881; that stretch reads FLGSYFITWD…GHFYYIRISE (509 aa). The active-site 4-aspartylphosphate intermediate is the Asp414. Residues Asp414, Lys415, Thr416, Glu511, Phe553, Lys576, Arg607, Thr687, Gly688, and Asp689 each coordinate ATP. Mg(2+) is bound at residue Asp414. Thr416 is a binding site for Mg(2+). A Phosphoserine modification is found at Ser738. Positions 798 and 804 each coordinate ATP. Asp825 contributes to the Mg(2+) binding site. Positions 828 and 829 each coordinate ATP. Position 829 (Asp829) interacts with Mg(2+). Residues 882–902 form a helical membrane-spanning segment; sequence LVQYFFYKNVCFIFPQFLYQF. Residues 903-914 lie on the Extracellular side of the membrane; sequence FCGFSQQTLYDT. Residues 915 to 934 form a helical membrane-spanning segment; it reads AYLTLYNISFTSLPILLYSL. Topologically, residues 935–964 are cytoplasmic; that stretch reads MEQHVGIDVLKRDPTLYRDVAKNALLRWRV. Residues 965–986 form a helical membrane-spanning segment; sequence FIYWTLLGLFDALVFFFGAYFV. Residues 987–1000 lie on the Extracellular side of the membrane; the sequence is FENTTVTSNGQIFG. A helical transmembrane segment spans residues 1001 to 1023; the sequence is NWTFGTLVFTVMVFTVTLKLALD. Residues 1024–1029 lie on the Cytoplasmic side of the membrane; the sequence is THYWTW. A helical transmembrane segment spans residues 1030 to 1050; it reads INHFVIWGSLLFYVVFSLLWG. Over 1051-1068 the chain is Extracellular; it reads GVIWPFLNYQRMYYVFIQ. The chain crosses the membrane as a helical span at residues 1069–1093; it reads MLSSGPAWLAIVLLVTISLLPDVLK. The Cytoplasmic segment spans residues 1094–1134; that stretch reads KVLCRQLWPTATERVQTKSQCLSVEQSTIFMLSQTSSSLSF.

The protein belongs to the cation transport ATPase (P-type) (TC 3.A.3) family. Type IV subfamily. In terms of assembly, component of a P4-ATPase flippase complex which consists of a catalytic alpha subunit ATP11A and an accessory beta subunit TMEM30A. Requires Mg(2+) as cofactor. Post-translationally, proteolytically cleaved by CASP3. In terms of tissue distribution, widely expressed. Expressed in myoblasts.

The protein localises to the cell membrane. Its subcellular location is the early endosome. It localises to the recycling endosome. It is found in the endoplasmic reticulum membrane. The enzyme catalyses ATP + H2O + phospholipidSide 1 = ADP + phosphate + phospholipidSide 2.. The catalysed reaction is a 1,2-diacyl-sn-glycero-3-phospho-L-serine(out) + ATP + H2O = a 1,2-diacyl-sn-glycero-3-phospho-L-serine(in) + ADP + phosphate + H(+). It carries out the reaction a 1,2-diacyl-sn-glycero-3-phosphoethanolamine(out) + ATP + H2O = a 1,2-diacyl-sn-glycero-3-phosphoethanolamine(in) + ADP + phosphate + H(+). Its activity is regulated as follows. The flippase activity is inactivated by caspase-mediated cleavage in apoptotic cells, allowing for PS exposure on the cell surface and engulfment of apoptotic cells by macrophages. The ATPase activity is up-regulated by aminophospholipids PS and PE and down-regulated by increasing intracellular Ca2+ levels. Functionally, catalytic component of a P4-ATPase flippase complex which catalyzes the hydrolysis of ATP coupled to the transport of aminophospholipids, phosphatidylserines (PS) and phosphatidylethanolamines (PE), from the outer to the inner leaflet of the plasma membrane. Does not show flippase activity toward phosphatidylcholine (PC). Contributes to the maintenance of membrane lipid asymmetry with a specific role in morphogenesis of muscle cells. In myoblasts, mediates PS enrichment at the inner leaflet of plasma membrane, triggering PIEZO1-dependent Ca2+ influx and Rho GTPases signal transduction, subsequently leading to the assembly of cortical actomyosin fibers and myotube formation. May be involved in the uptake of farnesyltransferase inhibitor drugs, such as lonafarnib. The polypeptide is Phospholipid-transporting ATPase IH (ATP11A) (Homo sapiens (Human)).